The chain runs to 946 residues: Zinc finger CCCH-type antiviral protein 1 (946 aa).

The N-terminal domain stretch occupies residues 1–254; the sequence is MTDPEVFCFI…DRSKSRDRFH (254 aa). A Nuclear localization signal motif is present at residues 69–76; sequence RARVCRRK. 4 C3H1-type zinc fingers span residues 73 to 86, 87 to 113, 150 to 172, and 173 to 194; these read CRRKYCQRPCDSLH, LCKLNLLGRCHYAQSQRNLCKYSHDVL, CKSYKGEGRKQICGQPQPCERLH, and ICEHFTRGNCSYLNCLRSHNLM. Disordered regions lie at residues 221 to 283 and 302 to 354; these read NKHT…KDPL and RAQL…AAGF. The interval 224–254 is binding to EXOSC5; sequence TRRNPPSMRAPHPHRRGGAHRDRSKSRDRFH. A compositionally biased stretch (basic and acidic residues) spans 242-257; sequence AHRDRSKSRDRFHHNS. S257 carries the phosphoserine modification. Phosphoserine; by GSK3-beta is present on S262. Phosphoserine occurs at positions 265, 269, and 273. At T277 the chain carries Phosphothreonine. The Nuclear export signal signature appears at 283–290; sequence LEDVSADV. A phosphoserine mark is found at S324 and S350. Positions 412-413 match the Nuclear localization signal motif; the sequence is KR. Residue S425 is modified to Phosphoserine. A disordered region spans residues 461 to 491; sequence NPAWPGTSTHNGPNGFSQIMDETPNVSKSSP. Residues 466–477 are compositionally biased toward polar residues; the sequence is GTSTHNGPNGFS. A Phosphotyrosine modification is found at Y508. Positions 523 to 570 are disordered; the sequence is GETTTPVQGSNRLPPSPLSSSTSHRVAASGSPGKSSTHASVSPASEPS. The segment covering 524–533 has biased composition (polar residues); it reads ETTTPVQGSN. At S553 the chain carries Phosphoserine. Residues 554–567 show a composition bias toward polar residues; it reads PGKSSTHASVSPAS. 2 positions are modified to phosphoserine: S583 and S680. One can recognise a WWE domain in the interval 684–771; sequence FVEKTLNSVF…ASKTQRHVVR (88 aa). The region spanning 805–946 is the PARP catalytic domain; it reads SPQRNASTVS…SLDSSGLQRK (142 aa).

It belongs to the ARTD/PARP family. As to quaternary structure, homodimer or homooligomer. Homooligomerization is essential for its antiviral activity. Interacts with EXOSC5. Interacts (via N-terminal domain) with DDX17 in an RNA-independent manner. Interacts with EXOSC3, EXOSC7, DCP2 and DCP1A. Interacts with PARN in an RNA-independent manner. Interacts with XRN1 in an RNA-dependent manner. Interacts (via N-terminal domain) with DHX30 (via N-terminus) in an RNA-independent manner. Isoform 2 interacts (via zinc-fingers) with RIGI in an RNA-dependent manner. Post-translationally, phosphorylation at Ser-273 is essential for sequential phosphorylation of Ser-269, Ser-265, Ser-262 and Ser-257 by GSK3-beta. Phosphorylation by GSK3-beta enhances its antiviral activity.

Its subcellular location is the cytoplasm. It localises to the nucleus. Its function is as follows. Antiviral protein which inhibits the replication of viruses by recruiting the cellular RNA degradation machineries to degrade the viral mRNAs. Binds to a ZAP-responsive element (ZRE) present in the target viral mRNA, recruits cellular poly(A)-specific ribonuclease PARN to remove the poly(A) tail, and the 3'-5' exoribonuclease complex exosome to degrade the RNA body from the 3'-end. It also recruits the decapping complex DCP1-DCP2 through RNA helicase p72 (DDX17) to remove the cap structure of the viral mRNA to initiate its degradation from the 5'-end. Its target viruses belong to families which include retroviridae: human immunodeficiency virus type 1 (HIV-1) and moloney and murine leukemia virus (MoMLV), filoviridae: ebola virus (EBOV) and marburg virus (MARV), togaviridae: sindbis virus (SINV) and Ross river virus (RRV). Specifically targets the multiply spliced but not unspliced or singly spliced HIV-1 mRNAs for degradation. Isoform 1 is a more potent viral inhibitor than isoform 2. Isoform 2 acts as a positive regulator of RIG-I signaling resulting in activation of the downstream effector IRF3 leading to the expression of type I IFNs and IFN stimulated genes (ISGs). The sequence is that of Zinc finger CCCH-type antiviral protein 1 (Zc3hav1) from Mus musculus (Mouse).